Reading from the N-terminus, the 99-residue chain is DNA-directed RNA polymerase subunit omega (99 aa).

The disordered stretch occupies residues 55-99 (EAGTVISDPNPEEKRERLRIEREERKRQREQEQKELENRLRDEKN). Over residues 65–99 (PEEKRERLRIEREERKRQREQEQKELENRLRDEKN) the composition is skewed to basic and acidic residues.

Belongs to the RNA polymerase subunit omega family. The RNAP catalytic core consists of 2 alpha, 1 beta, 1 beta' and 1 omega subunit. When a sigma factor is associated with the core the holoenzyme is formed, which can initiate transcription.

It catalyses the reaction RNA(n) + a ribonucleoside 5'-triphosphate = RNA(n+1) + diphosphate. In terms of biological role, promotes RNA polymerase assembly. Latches the N- and C-terminal regions of the beta' subunit thereby facilitating its interaction with the beta and alpha subunits. This Enterococcus faecalis (strain ATCC 700802 / V583) protein is DNA-directed RNA polymerase subunit omega.